The following is a 665-amino-acid chain: Filensin (665 aa).

The interval 1-40 is head; sequence MYRRSYVFQTRKEQYEHADEASRAAEPERPADEGWAGATS. Ser-5 carries the post-translational modification Phosphoserine. The IF rod domain occupies 40–320; the sequence is SLAALQGLGE…RIIEIEGNRL (281 aa). A coil 1A region spans residues 41-75; that stretch reads LAALQGLGERVAAHVQRARALEQRHAGLRRQLDAF. Ala-42 carries the N-acetylalanine modification. The tract at residues 76-84 is linker 1; that stretch reads QRLGELAGP. The interval 85 to 184 is coil 1B; the sequence is EDALARQVES…RHKKNLLEVQ (100 aa). Residues 185-201 are linker 12; sequence TYISILQQIIHTTPPAS. A coil 2 region spans residues 202–320; sequence IVTSGMREEK…RIIEIEGNRL (119 aa). Residues 321–665 are tail; it reads TSAFIETPIP…DKKKSGEKSS (345 aa). 2 positions are modified to phosphoserine: Ser-341 and Ser-420. Disordered stretches follow at residues 410 to 439 and 506 to 614; these read SKFE…QISK and YDGQ…KGPP. Gly-434 is lipidated: N-myristoyl glycine. Ser-513 is subject to Phosphoserine. Over residues 556 to 571 the composition is skewed to basic and acidic residues; sequence PEEKREGEERDEESRR. Position 665 is a phosphoserine (Ser-665).

This sequence belongs to the intermediate filament family. In terms of assembly, part of a complex required for lens intermediate filament formation composed of BFSP1, BFSP2 and CRYAA. Identified in a complex that contains VIM, EZR, AHNAK, BFSP1, BFSP2, ANK2, PLEC, PRX and spectrin. Found in a complex composed of PPL (via C-terminal linker domain), BFSP1 and BFSP2 in the retinal lens. Within the complex interacts with BFSP2. Interacts (via C-terminus) with MIP (via C-terminus) in aged lens fiber cells. Proteolytically cleaved during lens cell fiber differentiation with increased fragmentation as fiber cell age increases. In terms of processing, myristoylated at Gly-434 following proteolytic cleavage at Asp-433. Post-translationally, acetylated at Ala-42 following proteolytic cleavage at Leu-41. As to expression, expressed in the cortex and nucleus of the retina lens (at protein level).

The protein localises to the cell membrane. The protein resides in the cytoplasm. It localises to the cytoskeleton. It is found in the cell cortex. Functionally, required for the correct formation of lens intermediate filaments as part of a complex composed of BFSP1, BFSP2 and CRYAA. Involved in altering the calcium regulation of MIP water permeability. The polypeptide is Filensin (BFSP1) (Homo sapiens (Human)).